The chain runs to 341 residues: Heterogeneous nuclear ribonucleoproteins A2/B1 (341 aa).

2 consecutive RRM domains span residues R9 to K92 and K100 to Q179. Residue K10 forms a Glycyl lysine isopeptide (Lys-Gly) (interchain with G-Cter in SUMO2) linkage. S17 carries the phosphoserine modification. Position 26 is an omega-N-methylarginine (R26). Residue S73 is modified to Phosphoserine. K92 is subject to N6,N6-dimethyllysine; alternate. A Glycyl lysine isopeptide (Lys-Gly) (interchain with G-Cter in SUMO2); alternate cross-link involves residue K92. Glycyl lysine isopeptide (Lys-Gly) (interchain with G-Cter in SUMO2) cross-links involve residues K100, K108, and K125. At T128 the chain carries Phosphothreonine. S137 carries the phosphoserine modification. K140 is covalently cross-linked (Glycyl lysine isopeptide (Lys-Gly) (interchain with G-Cter in SUMO2)). T147 carries the phosphothreonine modification. Glycyl lysine isopeptide (Lys-Gly) (interchain with G-Cter in SUMO2); alternate cross-links involve residues K156 and K161. N6-acetyllysine; alternate is present on residues K156 and K161. Phosphothreonine is present on T164. A Glycyl lysine isopeptide (Lys-Gly) (interchain with G-Cter in SUMO2) cross-link involves residue K174. Phosphoserine occurs at positions 177 and 189. The segment at M181 to Y341 is disordered. Residues G190–P211 are compositionally biased toward gly residues. R191 bears the Asymmetric dimethylarginine; alternate mark. R191 is subject to Dimethylated arginine; alternate. R191 carries the post-translational modification Omega-N-methylarginine; alternate. S200 carries the phosphoserine modification. Residue R201 is modified to Asymmetric dimethylarginine; alternate. R201 is subject to Dimethylated arginine; alternate. The residue at position 201 (R201) is an Omega-N-methylarginine; alternate. S213 carries the post-translational modification Phosphoserine. R216 is subject to Omega-N-methylarginine. A phosphoserine mark is found at S219 and S224. Omega-N-methylarginine is present on R226. Phosphoserine is present on S247. R254 carries the asymmetric dimethylarginine; alternate modification. R254 is subject to Omega-N-methylarginine; alternate. A nuclear targeting sequence region spans residues Q296 to Y335. Over residues N308–Y341 the composition is skewed to gly residues. Phosphoserine is present on S312. An Omega-N-methylarginine modification is found at R313. Y319 is modified (phosphotyrosine). Phosphoserine is present on residues S329 and S332. At Y335 the chain carries Phosphotyrosine. An Omega-N-methylarginine modification is found at R338.

In terms of assembly, identified in the spliceosome C complex. Identified in a IGF2BP1-dependent mRNP granule complex containing untranslated mRNAs. Interacts with IGF2BP1. Interacts with C9orf72. Interacts with DGCR8. Interacts with TARDBP. Interacts with CKAP5. Interacts with PPIA/CYPA. Interacts (via C-terminus) with FAM76B; the interaction results in retention of HNRNPA2B1 in the nucleus and inhibition of the NF-kappa-B-mediated inflammatory pathway. Interacts with NF-kappa-B inhibitors NFKBIA and NFKBIE; the interaction may be mediated by the RRM2 domain of HNRNPA2B1, and HNRNPA2B1 may interact simultaneously with FAM76B and either NFKBIA or NFKBIE to form a complex. Sumoylated in exosomes, promoting miRNAs-binding. In terms of processing, asymmetric dimethylation at Arg-254 constitutes the major methylation site. According to a report, methylation affects subcellular location and promotes nuclear localization. According to another report, methylation at Arg-254 does not influence nucleocytoplasmic shuttling.

It localises to the nucleus. It is found in the nucleoplasm. Its subcellular location is the cytoplasmic granule. The protein resides in the secreted. The protein localises to the extracellular exosome. Its function is as follows. Heterogeneous nuclear ribonucleoprotein (hnRNP) that associates with nascent pre-mRNAs, packaging them into hnRNP particles. The hnRNP particle arrangement on nascent hnRNA is non-random and sequence-dependent and serves to condense and stabilize the transcripts and minimize tangling and knotting. Packaging plays a role in various processes such as transcription, pre-mRNA processing, RNA nuclear export, subcellular location, mRNA translation and stability of mature mRNAs. Forms hnRNP particles with at least 20 other different hnRNP and heterogeneous nuclear RNA in the nucleus. Involved in transport of specific mRNAs to the cytoplasm in oligodendrocytes and neurons: acts by specifically recognizing and binding the A2RE (21 nucleotide hnRNP A2 response element) or the A2RE11 (derivative 11 nucleotide oligonucleotide) sequence motifs present on some mRNAs, and promotes their transport to the cytoplasm. Specifically binds single-stranded telomeric DNA sequences, protecting telomeric DNA repeat against endonuclease digestion. Also binds other RNA molecules, such as primary miRNA (pri-miRNAs): acts as a nuclear 'reader' of the N6-methyladenosine (m6A) mark by specifically recognizing and binding a subset of nuclear m6A-containing pri-miRNAs. Binding to m6A-containing pri-miRNAs promotes pri-miRNA processing by enhancing binding of DGCR8 to pri-miRNA transcripts. Involved in miRNA sorting into exosomes following sumoylation, possibly by binding (m6A)-containing pre-miRNAs. Acts as a regulator of efficiency of mRNA splicing, possibly by binding to m6A-containing pre-mRNAs. Plays a role in the splicing of pyruvate kinase PKM by binding repressively to sequences flanking PKM exon 9, inhibiting exon 9 inclusion and resulting in exon 10 inclusion and production of the PKM M2 isoform. In Bos taurus (Bovine), this protein is Heterogeneous nuclear ribonucleoproteins A2/B1 (HNRNPA2B1).